The following is a 182-amino-acid chain: Testis-expressed protein 29 (182 aa).

Over 1–56 the chain is Extracellular; it reads MRYTTDIKKSPPQLLKTFAVCDISLYDICDYNVTRDQCKELGCCFYKGVCYKKVVP. A helical transmembrane segment spans residues 57-77; that stretch reads IYVQMFSTLIVLVTGIIIITI. The Cytoplasmic segment spans residues 78–182; sequence IYRIVQEIKR…PPTDPSENPP (105 aa). Residues 91–182 are disordered; that stretch reads LSMNSTPKAS…PPTDPSENPP (92 aa). The span at 115–170 shows a compositional bias: low complexity; it reads RAPSRSPSRTSSTLSSRSPTTAPTTAPTTDPATDPATDPATDPATDPATDPATDPA. Pro residues predominate over residues 171 to 182; it reads TAPPTDPSENPP.

It localises to the membrane. This is Testis-expressed protein 29 (Tex29) from Rattus norvegicus (Rat).